A 503-amino-acid chain; its full sequence is U6 snRNA (guanine-N(2))-methyltransferase THUMPD2 (503 aa).

Residues 161-266 (CQLEKQIKEE…DIYSVVGIPV (106 aa)) form the THUMP domain.

The protein belongs to the methyltransferase superfamily. In terms of assembly, part of the heterodimeric THUMPD2-TRM112 methyltransferase complex; this complex forms an active tRNA methyltransferase, where TRMT112 acts as an activator of the catalytic subunit THUMPD2. Expressed in a variety of tissues including brain, colon, gingiva, heart, kidney, liver, lung, placenta, small intestine, spleen and thymus.

The protein localises to the nucleus. The enzyme catalyses guanosine in U6 snRNA + S-adenosyl-L-methionine = N(2)-methylguanosine in U6 snRNA + S-adenosyl-L-homocysteine + H(+). Catalytic subunit of the THUMPD2-TRM112 methyltransferase complex, that specifically mediates the S-adenosyl-L-methionine-dependent N(2)-methylation of guanosine nucleotides, most probably at position 72 (m2G72), in the U6snRNA of the major spliceosome. This modification in the U6 snRNA affects the constitutive splicing efficiency of introns that have suboptimal splice sites and can impact final mRNA levels. The chain is U6 snRNA (guanine-N(2))-methyltransferase THUMPD2 from Homo sapiens (Human).